The primary structure comprises 149 residues: Ribonuclease pancreatic (149 aa).

The N-terminal stretch at 1-25 is a signal peptide; the sequence is MGLEKSLILFPLLVLVLGWVQPSLA. Substrate-binding residues include lysine 32 and arginine 35. The active-site Proton acceptor is the histidine 37. 4 disulfide bridges follow: cysteine 51–cysteine 109, cysteine 65–cysteine 120, cysteine 83–cysteine 135, and cysteine 90–cysteine 97. Residues 66–70, lysine 91, and arginine 110 contribute to the substrate site; that span reads KPVNT. Histidine 144 acts as the Proton donor in catalysis.

Belongs to the pancreatic ribonuclease family. As to quaternary structure, monomer. Interacts with and forms tight 1:1 complexes with RNH1. Dimerization of two such complexes may occur. Interaction with RNH1 inhibits this protein. In terms of tissue distribution, pancreas.

It is found in the secreted. The catalysed reaction is an [RNA] containing cytidine + H2O = an [RNA]-3'-cytidine-3'-phosphate + a 5'-hydroxy-ribonucleotide-3'-[RNA].. The enzyme catalyses an [RNA] containing uridine + H2O = an [RNA]-3'-uridine-3'-phosphate + a 5'-hydroxy-ribonucleotide-3'-[RNA].. In terms of biological role, endonuclease that catalyzes the cleavage of RNA on the 3' side of pyrimidine nucleotides. Acts on single-stranded and double-stranded RNA. The protein is Ribonuclease pancreatic (RNASE1) of Uranomys ruddi (White-bellied brush-furred rat).